We begin with the raw amino-acid sequence, 344 residues long: Late embryogenesis abundant protein 17 (344 aa).

2 disordered regions span residues 1–20 (MASR…RRAA) and 116–258 (KDYT…QGQG). Residues 3–52 (SRQDRREARAEADARRAAEEIARARDERVMQAEVDARSAADEIARARADR) are a coiled coil. Basic and acidic residues-rich tracts occupy residues 116 to 163 (KDYT…KDAV), 172 to 230 (EATK…DATK), and 238 to 252 (DKAR…DATD).

The protein belongs to the LEA type 4 family. Expressed in embryos.

The protein localises to the nucleus. Functionally, involved in abiotic stress responses. May function as chaperone and contribute to prevent the formation of damaging protein aggregates. In Oryza sativa subsp. japonica (Rice), this protein is Late embryogenesis abundant protein 17.